The following is a 337-amino-acid chain: Transcription initiation factor IIB (337 aa).

The TFIIB-type zinc-finger motif lies at 36–68 (SVQSVCPECGSRQLVHDYERAELVCQNCGLVLD). Residues cysteine 41, cysteine 44, cysteine 60, and cysteine 63 each contribute to the Zn(2+) site. 2 consecutive repeat copies span residues 154-237 (SELD…SREL) and 248-329 (DYVP…ELAE).

This sequence belongs to the TFIIB family.

Functionally, stabilizes TBP binding to an archaeal box-A promoter. Also responsible for recruiting RNA polymerase II to the pre-initiation complex (DNA-TBP-TFIIB). The sequence is that of Transcription initiation factor IIB from Methanoculleus marisnigri (strain ATCC 35101 / DSM 1498 / JR1).